Reading from the N-terminus, the 243-residue chain is tRNA (guanine-N(7)-)-methyltransferase (243 aa).

4 residues coordinate S-adenosyl-L-methionine: E74, E99, D126, and D149. D149 is an active-site residue. Substrate is bound by residues K153, D185, and T221–E224.

This sequence belongs to the class I-like SAM-binding methyltransferase superfamily. TrmB family.

The catalysed reaction is guanosine(46) in tRNA + S-adenosyl-L-methionine = N(7)-methylguanosine(46) in tRNA + S-adenosyl-L-homocysteine. It participates in tRNA modification; N(7)-methylguanine-tRNA biosynthesis. Catalyzes the formation of N(7)-methylguanine at position 46 (m7G46) in tRNA. This chain is tRNA (guanine-N(7)-)-methyltransferase, found in Psychromonas ingrahamii (strain DSM 17664 / CCUG 51855 / 37).